The following is a 66-amino-acid chain: Large ribosomal subunit protein bL35 (66 aa).

Residues 1 to 16 (MPKQKTHRASAKRFKR) show a composition bias toward basic residues. The segment at 1 to 21 (MPKQKTHRASAKRFKRTGSGG) is disordered.

Belongs to the bacterial ribosomal protein bL35 family.

The protein is Large ribosomal subunit protein bL35 of Streptococcus mutans serotype c (strain ATCC 700610 / UA159).